A 496-amino-acid polypeptide reads, in one-letter code: Lysine--tRNA ligase (496 aa).

The Mg(2+) site is built by Glu-409 and Glu-416.

Belongs to the class-II aminoacyl-tRNA synthetase family. In terms of assembly, homodimer. Mg(2+) is required as a cofactor.

It is found in the cytoplasm. It carries out the reaction tRNA(Lys) + L-lysine + ATP = L-lysyl-tRNA(Lys) + AMP + diphosphate. The polypeptide is Lysine--tRNA ligase (Streptococcus mutans serotype c (strain ATCC 700610 / UA159)).